A 545-amino-acid polypeptide reads, in one-letter code: Ribulokinase (545 aa).

The protein belongs to the ribulokinase family.

The enzyme catalyses D-ribulose + ATP = D-ribulose 5-phosphate + ADP + H(+). The catalysed reaction is L-ribulose + ATP = L-ribulose 5-phosphate + ADP + H(+). Its pathway is carbohydrate degradation; L-arabinose degradation via L-ribulose; D-xylulose 5-phosphate from L-arabinose (bacterial route): step 2/3. In Staphylococcus aureus (strain Mu3 / ATCC 700698), this protein is Ribulokinase.